Consider the following 473-residue polypeptide: Aspartyl/glutamyl-tRNA(Asn/Gln) amidotransferase subunit B (473 aa).

It belongs to the GatB/GatE family. GatB subfamily. As to quaternary structure, heterotrimer of A, B and C subunits.

The catalysed reaction is L-glutamyl-tRNA(Gln) + L-glutamine + ATP + H2O = L-glutaminyl-tRNA(Gln) + L-glutamate + ADP + phosphate + H(+). It catalyses the reaction L-aspartyl-tRNA(Asn) + L-glutamine + ATP + H2O = L-asparaginyl-tRNA(Asn) + L-glutamate + ADP + phosphate + 2 H(+). Allows the formation of correctly charged Asn-tRNA(Asn) or Gln-tRNA(Gln) through the transamidation of misacylated Asp-tRNA(Asn) or Glu-tRNA(Gln) in organisms which lack either or both of asparaginyl-tRNA or glutaminyl-tRNA synthetases. The reaction takes place in the presence of glutamine and ATP through an activated phospho-Asp-tRNA(Asn) or phospho-Glu-tRNA(Gln). In Wolbachia sp. subsp. Drosophila simulans (strain wRi), this protein is Aspartyl/glutamyl-tRNA(Asn/Gln) amidotransferase subunit B.